Reading from the N-terminus, the 232-residue chain is MQKNAAHTYAISSLLVLSLTGCAWIPSTPLVQGATSAQPVPGPTPVANGSIFQSAQPINYGYQPLFEDRRPRNIGDTLTIVLQENVSASKSSSANASRDGKTNFGFDTVPRYLQGVFGNARADVEASGGNTFNGKGGANASNTFSGTLTVTVDQVLVNGNLHVVGEKQIAINQGTEFIRFSGVVNPRTISGSNTVPSTQVADARIEYVGNGYINEAQNMGWLQRFFLNLSPM.

The first 21 residues, 1–21 (MQKNAAHTYAISSLLVLSLTG), serve as a signal peptide directing secretion. Cysteine 22 carries N-palmitoyl cysteine lipidation. Residue cysteine 22 is the site of S-diacylglycerol cysteine attachment.

Belongs to the FlgH family. As to quaternary structure, the basal body constitutes a major portion of the flagellar organelle and consists of four rings (L,P,S, and M) mounted on a central rod.

The protein localises to the cell outer membrane. It localises to the bacterial flagellum basal body. Functionally, assembles around the rod to form the L-ring and probably protects the motor/basal body from shearing forces during rotation. The polypeptide is Flagellar L-ring protein (Escherichia coli O6:H1 (strain CFT073 / ATCC 700928 / UPEC)).